We begin with the raw amino-acid sequence, 128 residues long: Large ribosomal subunit protein bL12 (128 aa).

It belongs to the bacterial ribosomal protein bL12 family. In terms of assembly, homodimer. Part of the ribosomal stalk of the 50S ribosomal subunit. Forms a multimeric L10(L12)X complex, where L10 forms an elongated spine to which 2 to 4 L12 dimers bind in a sequential fashion. Binds GTP-bound translation factors.

In terms of biological role, forms part of the ribosomal stalk which helps the ribosome interact with GTP-bound translation factors. Is thus essential for accurate translation. The polypeptide is Large ribosomal subunit protein bL12 (Desulfosudis oleivorans (strain DSM 6200 / JCM 39069 / Hxd3) (Desulfococcus oleovorans)).